Here is a 251-residue protein sequence, read N- to C-terminus: 5'-nucleotidase SurE (251 aa).

Residues Asp-8, Asp-9, Ser-39, and Asn-90 each contribute to the a divalent metal cation site.

Belongs to the SurE nucleotidase family. Requires a divalent metal cation as cofactor.

Its subcellular location is the cytoplasm. It carries out the reaction a ribonucleoside 5'-phosphate + H2O = a ribonucleoside + phosphate. Its function is as follows. Nucleotidase that shows phosphatase activity on nucleoside 5'-monophosphates. The protein is 5'-nucleotidase SurE of Colwellia psychrerythraea (strain 34H / ATCC BAA-681) (Vibrio psychroerythus).